The following is a 179-amino-acid chain: Peptidyl-prolyl cis-trans isomerase A (179 aa).

Positions 15-178 (FFDITIGGVE…KPVVIANCGQ (164 aa)) constitute a PPIase cyclophilin-type domain.

Belongs to the cyclophilin-type PPIase family.

It is found in the cytoplasm. The protein localises to the cytosol. It catalyses the reaction [protein]-peptidylproline (omega=180) = [protein]-peptidylproline (omega=0). With respect to regulation, binds cyclosporin A (CsA). CsA mediates some of its effects via an inhibitory action on PPIase. Functionally, PPIase that catalyzes the cis-trans isomerization of proline imidic peptide bonds in oligopeptides and may therefore assist protein folding. The sequence is that of Peptidyl-prolyl cis-trans isomerase A (ppiA) from Dictyostelium discoideum (Social amoeba).